Here is a 1184-residue protein sequence, read N- to C-terminus: DNA-directed RNA polymerase subunit beta (1184 aa).

Residues 1160–1184 form a disordered region; that stretch reads DDDFTNQNDAFNIVQPENAAAEKTE.

Belongs to the RNA polymerase beta chain family. The RNAP catalytic core consists of 2 alpha, 1 beta, 1 beta' and 1 omega subunit. When a sigma factor is associated with the core the holoenzyme is formed, which can initiate transcription.

It catalyses the reaction RNA(n) + a ribonucleoside 5'-triphosphate = RNA(n+1) + diphosphate. Its function is as follows. DNA-dependent RNA polymerase catalyzes the transcription of DNA into RNA using the four ribonucleoside triphosphates as substrates. The polypeptide is DNA-directed RNA polymerase subunit beta (Listeria monocytogenes serotype 4b (strain F2365)).